A 104-amino-acid polypeptide reads, in one-letter code: Complex III assembly factor LYRM7 (104 aa).

Belongs to the complex I LYR family. Interacts with UQCRFS1.

The protein localises to the mitochondrion matrix. Functionally, assembly factor required for Rieske Fe-S protein UQCRFS1 incorporation into the cytochrome b-c1 (CIII) complex. Functions as a chaperone, binding to this subunit within the mitochondrial matrix and stabilizing it prior to its translocation and insertion into the late CIII dimeric intermediate within the mitochondrial inner membrane. The protein is Complex III assembly factor LYRM7 (lyrm7) of Tetraodon nigroviridis (Spotted green pufferfish).